A 317-amino-acid polypeptide reads, in one-letter code: Porphobilinogen deaminase (317 aa).

An S-(dipyrrolylmethanemethyl)cysteine modification is found at Cys-245.

This sequence belongs to the HMBS family. In terms of assembly, monomer. It depends on dipyrromethane as a cofactor.

It catalyses the reaction 4 porphobilinogen + H2O = hydroxymethylbilane + 4 NH4(+). It functions in the pathway porphyrin-containing compound metabolism; protoporphyrin-IX biosynthesis; coproporphyrinogen-III from 5-aminolevulinate: step 2/4. The protein operates within porphyrin-containing compound metabolism; chlorophyll biosynthesis. Its function is as follows. Tetrapolymerization of the monopyrrole PBG into the hydroxymethylbilane pre-uroporphyrinogen in several discrete steps. This is Porphobilinogen deaminase from Synechococcus sp. (strain CC9902).